The chain runs to 213 residues: Pyrrolidone-carboxylate peptidase (213 aa).

Residues Glu-81, Cys-144, and His-166 contribute to the active site.

It belongs to the peptidase C15 family. As to quaternary structure, homodimer.

The protein localises to the cytoplasm. The enzyme catalyses Release of an N-terminal pyroglutamyl group from a polypeptide, the second amino acid generally not being Pro.. In terms of biological role, removes 5-oxoproline from various penultimate amino acid residues except L-proline. This is Pyrrolidone-carboxylate peptidase (pcp) from Pseudomonas fluorescens.